Here is a 1139-residue protein sequence, read N- to C-terminus: Protein lin-25 (1139 aa).

Residues 695 to 701 carry the Nuclear localization signal motif; sequence IKKKKDP.

In terms of tissue distribution, expressed in seam cells and all six vulva precursor cells (VPC). After VPC division, expression is restricted to descendants of the VPC cell lineages P5.p, P6.p and P7.p (at protein level).

Its subcellular location is the nucleus. It localises to the cytoplasm. Its function is as follows. Participates in the inductive signaling pathway downstream of let-60 Ras and the RAF/MAP kinase cascade to regulate specification and differentiation of many cell types. Positively regulates the fate of vulval precursor cells. Required for induction of the P12 and excretory duct cell fates. In males, it is also required for proper formation of spicules. Does not function in the signaling pathway that promotes exit from pachytene. Plays a role in responses to M.nematophilum-mediated bacterial infection by promoting tail swelling and preventing constipation. The sequence is that of Protein lin-25 (lin-25) from Caenorhabditis elegans.